A 359-amino-acid polypeptide reads, in one-letter code: 4-galactosyl-N-acetylglucosaminide 3-alpha-L-fucosyltransferase FUT6 (359 aa).

Over 1–14 (MDPLGPAKPQWSCR) the chain is Cytoplasmic. Residues 15 to 34 (CCLTTLLFQLLVAVCFFSYL) traverse the membrane as a helical; Signal-anchor for type II membrane protein segment. Residues 35-359 (RVSRDDPTVY…QTRSITAWFT (325 aa)) are Lumenal-facing. Residues asparagine 46, asparagine 91, asparagine 153, and asparagine 184 are each glycosylated (N-linked (GlcNAc...) asparagine). Residues 73–112 (KPTALPRCSEMLPGTADCNITADRKVYPQADAVIVHHREV) are determines site-specific fucosylation.

This sequence belongs to the glycosyltransferase 10 family. In terms of assembly, homodimer and monomer. Monomer (secreted form). In terms of processing, N-glycosylated. Proteolytic cleavage releases a secreted glycoform of 43 kDa.

Its subcellular location is the golgi apparatus. The protein resides in the golgi stack membrane. The protein localises to the secreted. It catalyses the reaction a beta-D-galactosyl-(1-&gt;4)-N-acetyl-beta-D-glucosaminyl derivative + GDP-beta-L-fucose = a beta-D-galactosyl-(1-&gt;4)-[alpha-L-fucosyl-(1-&gt;3)]-N-acetyl-beta-D-glucosaminyl derivative + GDP + H(+). The catalysed reaction is an N-acetyl-alpha-neuraminyl-(2-&gt;3)-beta-D-galactosyl-(1-&gt;4)-N-acetyl-beta-D-glucosaminyl derivative + GDP-beta-L-fucose = an alpha-Neu5Ac-(2-&gt;3)-beta-D-Gal-(1-&gt;4)-[alpha-L-Fuc-(1-&gt;3)]-beta-D-GlcNAc derivative + GDP + H(+). It carries out the reaction an alpha-Neu5Ac-(2-&gt;3)-beta-D-Gal-(1-&gt;4)-beta-D-GlcNAc-(1-&gt;3)-beta-D-Gal-(1-&gt;4)-[alpha-L-Fuc-(1-&gt;3)]-beta-D-GlcNAc derivative + GDP-beta-L-fucose = an alpha-Neu5Ac-(2-&gt;3)-beta-D-Gal-(1-&gt;4)-[alpha-L-Fuc-(1-&gt;3)]-beta-D-GlcNAc-(1-&gt;3)-beta-D-Gal-(1-&gt;4)-[alpha-L-Fuc-(1-&gt;3)]-beta-D-GlcNAc derivative + GDP + H(+). The enzyme catalyses a neolactoside nLc6Cer + GDP-beta-L-fucose = beta-D-Gal-(1-&gt;4)-[alpha-L-Fuc-(1-&gt;3)]-beta-D-GlcNAc-(1-&gt;3)-beta-D-Gal-(1-&gt;4)-beta-D-GlcNAc-(1-&gt;3)-beta-D-Gal-(1-&gt;4)-beta-D-Glc-(1&lt;-&gt;1')-Cer + GDP + H(+). It catalyses the reaction a neolactoside nLc6Cer + GDP-beta-L-fucose = beta-D-galactosyl-(1-&gt;4)-N-acetyl-beta-D-glucosaminyl-(1-&gt;3)-beta-D-galactosyl-(1-&gt;4)-[alpha-L-fucosyl-(1-&gt;3)]-N-acetyl-beta-D-glucosaminyl-(1-&gt;3)-beta-D-galactosyl-(1-&gt;4)-beta-D-glucosyl-(1&lt;-&gt;1')-ceramide + GDP + H(+). The catalysed reaction is a neolactoside VI(3)-alpha-NeuNAc-nLc6Cer + GDP-beta-L-fucose = a neolactoside VI(3)-alpha-NeuAc,V(3)-alphaFuc-nLc6Cer + GDP + H(+). It carries out the reaction beta-D-galactosyl-(1-&gt;4)-N-acetyl-D-glucosamine + GDP-beta-L-fucose = beta-D-galactosyl-(1-&gt;4)-[alpha-L-fucosyl-(1-&gt;3)]-N-acetyl-D-glucosamine + GDP + H(+). The enzyme catalyses N-acetyl-alpha-neuraminosyl-(2-&gt;3)-beta-D-galactosyl-(1-&gt;4)-N-acetyl-beta-D-glucosamine + GDP-beta-L-fucose = N-acetyl-alpha-neuraminosyl-(2-&gt;3)-beta-D-galactosyl-(1-&gt;4)-[alpha-L-fucosyl-(1-&gt;3)]-N-acetyl-beta-D-glucosamine + GDP + H(+). It catalyses the reaction lactose + GDP-beta-L-fucose = beta-D-galactosyl-(1-&gt;4)-[alpha-L-fucosyl-(1-&gt;3)]-D-glucose + GDP + H(+). The catalysed reaction is alpha-L-Fuc-(1-&gt;2)-beta-D-Gal-(1-&gt;4)-D-Glc + GDP-beta-L-fucose = alpha-L-Fuc-(1-&gt;2)-beta-D-Gal-(1-&gt;4)-[alpha-L-Fuc-(1-&gt;3)]-D-Glc + GDP + H(+). It carries out the reaction a beta-D-galactosyl-(1-&gt;4)-N-acetyl-beta-D-6-sulfooxy-glucosaminyl derivative + GDP-beta-L-fucose = a beta-D-galactosyl-(1-&gt;4)-[alpha-L-fucosyl-(1-&gt;3)]-N-acetyl-beta-D-6-sulfooxy-glucosaminyl derivative + GDP + H(+). It functions in the pathway protein modification; protein glycosylation. Catalyzes the transfer of L-fucose, from a guanosine diphosphate-beta-L-fucose, to the N-acetyl glucosamine (GlcNAc) of a distal alpha2,3 sialylated lactosamine unit of a glycoprotein- or glycolipid-linked sialopolylactosamines chain or of a distal or internal lactosamine unit of a neutral glycoprotein- or glycolipid-linked polylactosamines chain through an alpha-1,3 glycosidic linkage and participates in surface expression of the sialyl Lewis X (sLe(x)), Lewis X (Le(x)) and non sialylated VIM2 determinants. Moreover transfers fucose to H-type 2 (Fucalpha1-2Galbeta1-4GlcNAc) chain acceptor substrates and participates in difucosylated sialyl Lewis x determinants. Also fucosylates a polylactosamine substrate having a 6 sulfate modification at the GlcNAc moiety and gives rise to sialyl and non-sialyl 6-sulfo lewis X. Does not have activity towards type 1 ((Galbeta1-3GlcNAc)) and H-type 1 chain (Fucalpha1-2Galbeta1-3GlcNAc) acceptors substrates. The chain is 4-galactosyl-N-acetylglucosaminide 3-alpha-L-fucosyltransferase FUT6 from Gorilla gorilla gorilla (Western lowland gorilla).